A 522-amino-acid chain; its full sequence is Chromosomal replication initiator protein DnaA (522 aa).

A domain I, interacts with DnaA modulators region spans residues 1–71; sequence MQDFWHAASA…QSLACDYWEM (71 aa). Positions 71–185 are domain II; sequence MQVDVQFVLD…PVDDTVHERS (115 aa). The interval 186-402 is domain III, AAA+ region; the sequence is RLNPILTFDN…GALRKILAYS (217 aa). Residues Gly230, Gly232, Lys233, and Thr234 each contribute to the ATP site. A domain IV, binds dsDNA region spans residues 403-522; the sequence is NFHGKEITIE…LHVLEQTLKG (120 aa).

The protein belongs to the DnaA family. Oligomerizes as a right-handed, spiral filament on DNA at oriC.

Its subcellular location is the cytoplasm. Its function is as follows. Plays an essential role in the initiation and regulation of chromosomal replication. ATP-DnaA binds to the origin of replication (oriC) to initiate formation of the DNA replication initiation complex once per cell cycle. Binds the DnaA box (a 9 base pair repeat at the origin) and separates the double-stranded (ds)DNA. Forms a right-handed helical filament on oriC DNA; dsDNA binds to the exterior of the filament while single-stranded (ss)DNA is stabiized in the filament's interior. The ATP-DnaA-oriC complex binds and stabilizes one strand of the AT-rich DNA unwinding element (DUE), permitting loading of DNA polymerase. After initiation quickly degrades to an ADP-DnaA complex that is not apt for DNA replication. Binds acidic phospholipids. In Ralstonia nicotianae (strain ATCC BAA-1114 / GMI1000) (Ralstonia solanacearum), this protein is Chromosomal replication initiator protein DnaA.